We begin with the raw amino-acid sequence, 84 residues long: UPF0291 protein EUBELI_00985 (84 aa).

The protein belongs to the UPF0291 family.

It is found in the cytoplasm. This chain is UPF0291 protein EUBELI_00985, found in Lachnospira eligens (strain ATCC 27750 / DSM 3376 / VPI C15-48 / C15-B4) (Eubacterium eligens).